A 181-amino-acid chain; its full sequence is Isopentenyl-diphosphate Delta-isomerase (181 aa).

The Mn(2+) site is built by His-25 and His-32. The region spanning 30 to 164 (LLHLAFSCWL…PWAFSPWMVL (135 aa)) is the Nudix hydrolase domain. The active site involves Cys-67. Mn(2+) is bound at residue His-69. Glu-87 is a binding site for Mg(2+). Residues Glu-114 and Glu-116 each contribute to the Mn(2+) site. The active site involves Glu-116.

Belongs to the IPP isomerase type 1 family. As to quaternary structure, homodimer. Mg(2+) serves as cofactor. The cofactor is Mn(2+).

It localises to the cytoplasm. It catalyses the reaction isopentenyl diphosphate = dimethylallyl diphosphate. It functions in the pathway isoprenoid biosynthesis; dimethylallyl diphosphate biosynthesis; dimethylallyl diphosphate from isopentenyl diphosphate: step 1/1. Its function is as follows. Catalyzes the 1,3-allylic rearrangement of the homoallylic substrate isopentenyl (IPP) to its highly electrophilic allylic isomer, dimethylallyl diphosphate (DMAPP). The sequence is that of Isopentenyl-diphosphate Delta-isomerase from Citrobacter koseri (strain ATCC BAA-895 / CDC 4225-83 / SGSC4696).